The chain runs to 286 residues: Polyamine aminopropyltransferase (286 aa).

One can recognise a PABS domain in the interval 5–238 (TMWHETLHDQ…GIMTFAWATD (234 aa)). Q33 contributes to the S-methyl-5'-thioadenosine binding site. Residues H64 and D88 each contribute to the spermidine site. Residues E108 and 140–141 (DG) contribute to the S-methyl-5'-thioadenosine site. D158 serves as the catalytic Proton acceptor. 158–161 (DCTD) provides a ligand contact to spermidine. Position 165 (P165) interacts with S-methyl-5'-thioadenosine.

Belongs to the spermidine/spermine synthase family. Homodimer or homotetramer.

The protein resides in the cytoplasm. The enzyme catalyses S-adenosyl 3-(methylsulfanyl)propylamine + putrescine = S-methyl-5'-thioadenosine + spermidine + H(+). The protein operates within amine and polyamine biosynthesis; spermidine biosynthesis; spermidine from putrescine: step 1/1. In terms of biological role, catalyzes the irreversible transfer of a propylamine group from the amino donor S-adenosylmethioninamine (decarboxy-AdoMet) to putrescine (1,4-diaminobutane) to yield spermidine. The polypeptide is Polyamine aminopropyltransferase (Salmonella arizonae (strain ATCC BAA-731 / CDC346-86 / RSK2980)).